The primary structure comprises 149 residues: uncharacterized protein (149 aa).

Residues 124–144 (IIIIALIIILANYAPSIIGKI) traverse the membrane as a helical segment.

The protein belongs to the M.jannaschii MJ0023/MJ0349/MJ1072/MJ1074/MJ1107/MJECL16 family.

Its subcellular location is the membrane. This is an uncharacterized protein from Methanocaldococcus jannaschii (strain ATCC 43067 / DSM 2661 / JAL-1 / JCM 10045 / NBRC 100440) (Methanococcus jannaschii).